A 629-amino-acid chain; its full sequence is Chaperone protein HtpG (629 aa).

The tract at residues 1-335 is a; substrate-binding; sequence MSSNPTSSVR…TEDLPLNVSR (335 aa). The segment at 336-547 is b; it reads ELVQASPVMA…KDALDSQFEK (212 aa). Residues 548–629 are c; that stretch reads MMKMMNKDAD…NELVEAATRS (82 aa).

This sequence belongs to the heat shock protein 90 family. As to quaternary structure, homodimer.

The protein localises to the cytoplasm. Molecular chaperone. Has ATPase activity. The polypeptide is Chaperone protein HtpG (Chlorobaculum tepidum (strain ATCC 49652 / DSM 12025 / NBRC 103806 / TLS) (Chlorobium tepidum)).